The chain runs to 70 residues: Melittin (70 aa).

Positions 1–21 are cleaved as a signal peptide; the sequence is MKFLVNVALVFMVVYISFIYA. The propeptide at 22–43 is removed by a dipeptidylpeptidase; it reads APEPEPAPEAEAEADAEADPEA. G44 carries the post-translational modification N-formylglycine; partial. Q69 carries the glutamine amide modification.

This sequence belongs to the melittin family. Monomer (in solution and for integration into membranes), homotetramer (in solution and potentially as a toroidal pore in membranes), and potenially homomultimer (as a toroidal pore in membranes). As to expression, expressed by the venom gland.

It is found in the secreted. It localises to the target cell membrane. In terms of biological role, main toxin of bee venom with strong hemolytic activity and antimicrobial activity. It has enhancing effects on bee venom phospholipase A2 activity. This amphipathic toxin binds to negatively charged membrane surface and forms pore by inserting into lipid bilayers inducing the leakage of ions and molecules and the enhancement of permeability that ultimately leads to cell lysis. It acts as a voltage-gated pore with higher selectivity for anions over cations. The ion conductance has been shown to be voltage-dependent. Self-association of melittin in membranes is promoted by high ionic strength, but not by the presence of negatively charged lipids. In vivo, intradermal injection into healthy human volunteers produce sharp pain sensation and an inflammatory response. It produces pain by activating primary nociceptor cells directly and indirectly due to its ability to activate plasma membrane phospholipase A2 and its pore-forming activity. This is Melittin (MELT) from Apis cerana cerana (Oriental honeybee).